A 473-amino-acid chain; its full sequence is GTPase Der (473 aa).

EngA-type G domains follow at residues 3–167 (FTVA…GKDR) and 203–378 (LRVA…RVWN). GTP contacts are provided by residues 9 to 16 (GRPNVGKS), 56 to 60 (DTAGL), 119 to 122 (NKSE), 209 to 216 (GRPNAGKS), 256 to 260 (DTAGM), and 321 to 324 (NKWD). Residues 379–463 (KRISTAKLNR…PIRIHFRSAE (85 aa)) form the KH-like domain.

It belongs to the TRAFAC class TrmE-Era-EngA-EngB-Septin-like GTPase superfamily. EngA (Der) GTPase family. As to quaternary structure, associates with the 50S ribosomal subunit.

In terms of biological role, GTPase that plays an essential role in the late steps of ribosome biogenesis. This chain is GTPase Der, found in Rhizobium leguminosarum bv. trifolii (strain WSM2304).